We begin with the raw amino-acid sequence, 539 residues long: E3 ubiquitin-protein ligase arc-1 (539 aa).

The segment at 6-53 adopts an RING-type zinc-finger fold; sequence CNVCNEEYSARDPLKCPRVLTGCGHTICHNCAISIAGRNSSIFCPFDR. The B box-type zinc-finger motif lies at 103 to 149; it reads LLNLECDEDSEHVAVIYCTVCDSNLCERCSESTHSTNVLSKHRRIPL. An ARF-like region spans residues 369-539; it reads ESRVVLLGLD…LSRLNGTCPV (171 aa). Residues 376–383, 422–426, and 481–484 each bind GTP; these read GLDGAGKT, DVGGL, and NRKD.

In the C-terminal section; belongs to the small GTPase superfamily. Arf family.

The catalysed reaction is S-ubiquitinyl-[E2 ubiquitin-conjugating enzyme]-L-cysteine + [acceptor protein]-L-lysine = [E2 ubiquitin-conjugating enzyme]-L-cysteine + N(6)-ubiquitinyl-[acceptor protein]-L-lysine.. Its pathway is protein modification; protein ubiquitination. Functionally, acts as an E3 ubiquitin-protein ligase. The protein is E3 ubiquitin-protein ligase arc-1 (arc-1) of Caenorhabditis elegans.